Reading from the N-terminus, the 320-residue chain is Fructose-1,6-bisphosphatase class 1 (320 aa).

Residues Glu-84, Asp-103, Leu-105, and Asp-106 each contribute to the Mg(2+) site. Residues 106-109 (DGSS), Asn-196, and Lys-262 contribute to the substrate site. Position 268 (Glu-268) interacts with Mg(2+).

It belongs to the FBPase class 1 family. As to quaternary structure, homotetramer. It depends on Mg(2+) as a cofactor.

It localises to the cytoplasm. It carries out the reaction beta-D-fructose 1,6-bisphosphate + H2O = beta-D-fructose 6-phosphate + phosphate. It participates in carbohydrate biosynthesis; gluconeogenesis. This Shewanella amazonensis (strain ATCC BAA-1098 / SB2B) protein is Fructose-1,6-bisphosphatase class 1.